The sequence spans 219 residues: 2-hydroxy-3-keto-5-methylthiopentenyl-1-phosphate phosphatase (219 aa).

The protein belongs to the HAD-like hydrolase superfamily. MtnX family.

The enzyme catalyses 2-hydroxy-5-methylsulfanyl-3-oxopent-1-enyl phosphate + H2O = 1,2-dihydroxy-5-(methylsulfanyl)pent-1-en-3-one + phosphate. The protein operates within amino-acid biosynthesis; L-methionine biosynthesis via salvage pathway; L-methionine from S-methyl-5-thio-alpha-D-ribose 1-phosphate: step 4/6. Its function is as follows. Dephosphorylates 2-hydroxy-3-keto-5-methylthiopentenyl-1-phosphate (HK-MTPenyl-1-P) yielding 1,2-dihydroxy-3-keto-5-methylthiopentene (DHK-MTPene). This is 2-hydroxy-3-keto-5-methylthiopentenyl-1-phosphate phosphatase from Bacillus cereus (strain G9842).